Consider the following 379-residue polypeptide: Probable RNA methyltransferase RB6963 (379 aa).

Catalysis depends on glutamate 89, which acts as the Proton acceptor. The 237-residue stretch at 96 to 332 folds into the Radical SAM core domain; that stretch reads ATGRTTLCVS…VRYSLGNDIE (237 aa). An intrachain disulfide couples cysteine 103 to cysteine 335. Residues cysteine 110, cysteine 114, and cysteine 117 each contribute to the [4Fe-4S] cluster site. S-adenosyl-L-methionine contacts are provided by residues 160 to 161, serine 192, 215 to 217, and asparagine 291; these read GE and SLH. Residue cysteine 335 is the S-methylcysteine intermediate of the active site.

It belongs to the radical SAM superfamily. RlmN family. [4Fe-4S] cluster is required as a cofactor.

It localises to the cytoplasm. The chain is Probable RNA methyltransferase RB6963 from Rhodopirellula baltica (strain DSM 10527 / NCIMB 13988 / SH1).